The primary structure comprises 422 residues: Serine--tRNA ligase (422 aa).

The disordered stretch occupies residues Met1–Arg20. Thr229 to Glu231 serves as a coordination point for L-serine. Arg260–Glu262 contributes to the ATP binding site. Glu283 serves as a coordination point for L-serine. Glu347–Ser350 is a binding site for ATP. Ser383 serves as a coordination point for L-serine.

Belongs to the class-II aminoacyl-tRNA synthetase family. Type-1 seryl-tRNA synthetase subfamily. In terms of assembly, homodimer. The tRNA molecule binds across the dimer.

Its subcellular location is the cytoplasm. The enzyme catalyses tRNA(Ser) + L-serine + ATP = L-seryl-tRNA(Ser) + AMP + diphosphate + H(+). The catalysed reaction is tRNA(Sec) + L-serine + ATP = L-seryl-tRNA(Sec) + AMP + diphosphate + H(+). Its pathway is aminoacyl-tRNA biosynthesis; selenocysteinyl-tRNA(Sec) biosynthesis; L-seryl-tRNA(Sec) from L-serine and tRNA(Sec): step 1/1. In terms of biological role, catalyzes the attachment of serine to tRNA(Ser). Is also able to aminoacylate tRNA(Sec) with serine, to form the misacylated tRNA L-seryl-tRNA(Sec), which will be further converted into selenocysteinyl-tRNA(Sec). The protein is Serine--tRNA ligase of Paramagnetospirillum magneticum (strain ATCC 700264 / AMB-1) (Magnetospirillum magneticum).